The primary structure comprises 415 residues: Casein kinase I isoform delta (415 aa).

Residues 9-277 (YRLGRKIGSG…YLRQLFRNLF (269 aa)) form the Protein kinase domain. ATP-binding positions include 15 to 23 (IGSGSFGDI) and lysine 38. Aspartate 128 (proton acceptor) is an active-site residue. Residues 278–364 (HRQGFSYDYV…TSPRPVSGME (87 aa)) are centrosomal localization signal (CLS). Residues 301 to 315 (ADDAERERRDREERL) are compositionally biased toward basic and acidic residues. The interval 301–415 (ADDAERERRD…SSGLQSVVHR (115 aa)) is disordered. The autoinhibitory stretch occupies residues 317–342 (HSRNPATRGLPSTASGRLRGTQEVAP). 2 positions are modified to phosphoserine: serine 328 and serine 331. A compositionally biased stretch (polar residues) spans 347-358 (TPTSHTANTSPR). Phosphoserine is present on serine 370. Arginine 375 bears the Omega-N-methylarginine mark. A compositionally biased stretch (polar residues) spans 380 to 400 (NVSSSDLTGRQDTSRMSTSQI). 6 positions are modified to phosphoserine: serine 382, serine 383, serine 384, proline 401, serine 407, and serine 411.

It belongs to the protein kinase superfamily. CK1 Ser/Thr protein kinase family. Casein kinase I subfamily. As to quaternary structure, monomer. Component of the circadian core oscillator, which includes the CRY proteins, CLOCK, or NPAS2, BMAL1 or BMAL2, CSNK1D and/or CSNK1E, TIMELESS and the PER proteins. Interacts directly with PER1 and PER2 which may lead to their degradation. Interacts with MAP1A. Interacts with MAPT/TAU, DBNDD2, AIB1/NCOA3 and ESR1. Interacts with AKAP9/AKAP450; this interaction promotes centrosomal subcellular location. Binds to tubulins in mitotic cells upon DNA damage. Interacts with GJA1. Interacts with SNAPIN. Interacts with DNMT1. Interacts with DDX3X; this interaction enhances CSNK1D kinase activity in vitro, but it is unclear whether this interaction is physiologically relevant. Interacts with FAM83A, FAM83B, FAM83E and FAM83H (via DUF1669). In terms of processing, autophosphorylated on serine and threonine residues; this autophosphorylation represses activity. Reactivated by phosphatase-mediated dephosphorylation. May be dephosphorylated by PP1. In terms of tissue distribution, expressed ubiquitously. However, kinase activity is not uniform, with highest kinase activity in splenocytes.

It localises to the cytoplasm. It is found in the nucleus. The protein resides in the cytoskeleton. Its subcellular location is the microtubule organizing center. The protein localises to the centrosome. It localises to the perinuclear region. It is found in the cell membrane. The protein resides in the spindle. Its subcellular location is the golgi apparatus. The enzyme catalyses L-seryl-[protein] + ATP = O-phospho-L-seryl-[protein] + ADP + H(+). It carries out the reaction L-threonyl-[protein] + ATP = O-phospho-L-threonyl-[protein] + ADP + H(+). It catalyses the reaction L-seryl-[tau protein] + ATP = O-phospho-L-seryl-[tau protein] + ADP + H(+). The catalysed reaction is L-threonyl-[tau protein] + ATP = O-phospho-L-threonyl-[tau protein] + ADP + H(+). Its activity is regulated as follows. Exhibits substrate-dependent heparin activation. Drug-mediated inhibition leads to a delay of the oscillations with the magnitude of this effect dependent upon the timing of drug administration. Inhibited by phosphorylation. In terms of biological role, essential serine/threonine-protein kinase that regulates diverse cellular growth and survival processes including Wnt signaling, DNA repair and circadian rhythms. It can phosphorylate a large number of proteins. Casein kinases are operationally defined by their preferential utilization of acidic proteins such as caseins as substrates. Phosphorylates connexin-43/GJA1, MAP1A, SNAPIN, MAPT/TAU, TOP2A, DCK, HIF1A, EIF6, p53/TP53, DVL2, DVL3, ESR1, AIB1/NCOA3, DNMT1, PKD2, YAP1, PER1 and PER2. Central component of the circadian clock. In balance with PP1, determines the circadian period length through the regulation of the speed and rhythmicity of PER1 and PER2 phosphorylation. Controls PER1 and PER2 nuclear transport and degradation. YAP1 phosphorylation promotes its SCF(beta-TRCP) E3 ubiquitin ligase-mediated ubiquitination and subsequent degradation. DNMT1 phosphorylation reduces its DNA-binding activity. Phosphorylation of ESR1 and AIB1/NCOA3 stimulates their activity and coactivation. Phosphorylation of DVL2 and DVL3 regulates WNT3A signaling pathway that controls neurite outgrowth. Phosphorylates NEDD9/HEF1. EIF6 phosphorylation promotes its nuclear export. Triggers down-regulation of dopamine receptors in the forebrain. Activates DCK in vitro by phosphorylation. TOP2A phosphorylation favors DNA cleavable complex formation. May regulate the formation of the mitotic spindle apparatus in extravillous trophoblast. Modulates connexin-43/GJA1 gap junction assembly by phosphorylation. Probably involved in lymphocyte physiology. Regulates fast synaptic transmission mediated by glutamate. This Mus musculus (Mouse) protein is Casein kinase I isoform delta (Csnk1d).